The sequence spans 49 residues: DCASGPCCRDCKFLEEGTICNMARGDDMDDYCNGKTCDCPRNPHKWPAP.

The 47-residue stretch at 1–47 (DCASGPCCRDCKFLEEGTICNMARGDDMDDYCNGKTCDCPRNPHKWP) folds into the Disintegrin domain. 4 disulfides stabilise this stretch: Cys-2-Cys-11, Cys-7-Cys-32, Cys-8-Cys-37, and Cys-20-Cys-39. The short motif at 24–26 (RGD) is the Cell attachment site element.

Belongs to the venom metalloproteinase (M12B) family. P-II subfamily. P-IIa sub-subfamily. Monomer. Expressed by the venom gland.

Its subcellular location is the secreted. Has antiplatelet activities on guinea pig, followed by human, rabbit and rat platelet-rich plasma. This is Disintegrin echistatin-gamma from Echis pyramidum leakeyi (Leakey's carpet viper).